Here is a 122-residue protein sequence, read N- to C-terminus: uncharacterized protein (122 aa).

This is an uncharacterized protein from Dictyostelium discoideum (Social amoeba).